The following is a 522-amino-acid chain: Colicin-E1 (522 aa).

Disordered regions lie at residues 26-52 and 136-165; these read NGTP…AAIH and EEKA…REKA. A compositionally biased stretch (gly residues) spans 30-42; that stretch reads DGSGSGGGGGKGG. The next 2 membrane-spanning stretches (helical) occupy residues 471 to 487 and 494 to 510; these read AADA…FSLL and IWGI…YIDK.

It belongs to the channel forming colicin family.

It is found in the cell membrane. Its function is as follows. This colicin is a channel-forming colicin. This class of transmembrane toxins depolarize the cytoplasmic membrane, leading to dissipation of cellular energy. Functionally, colicins are polypeptide toxins produced by and active against E.coli and closely related bacteria. In Escherichia coli, this protein is Colicin-E1 (cea).